Reading from the N-terminus, the 177-residue chain is PBAN-type neuropeptides (177 aa).

The signal sequence occupies residues 1-23 (MIVTGNPVCAIALLLCLVFRASG). A propeptide spanning residues 24–54 (EYELEMSSGGSNDGRSPSNDFGSCTDGKCTK) is cleaved from the precursor. Residues 28-73 (EMSSGGSNDGRSPSNDFGSCTDGKCTKRTTTTQESGISSGMWFGPR) form a disordered region. Positions 31–45 (SGGSNDGRSPSNDFG) are enriched in polar residues. Over residues 47–59 (CTDGKCTKRTTTT) the composition is skewed to low complexity. Leu74 carries the post-translational modification Leucine amide. Positions 78-113 (HKSNEKQQINPEIEMLVNALDQPGMRWTVITIPANE) are excised as a propeptide. Leu124, Leu154, and Leu166 each carry leucine amide. Positions 169-177 (QSRSVSRKI) are excised as a propeptide.

It belongs to the pyrokinin family. In terms of tissue distribution, pyrokinins (PK) 1 to 4 are expressed in the retrocerebral complex. PK 1 is expressed in central brain, anntennal lobes and abominal ganglia. PK 2 is expressed in optical lobes and in gnathal, thoracic and abdominal ganglia. PK 3 is expressed in optical lobes and in thoracic and abdominal ganglia (at protein level).

It is found in the secreted. Its function is as follows. Pyrokinins mediate visceral muscle contractile activity (myotropic activity). In Camponotus floridanus (Florida carpenter ant), this protein is PBAN-type neuropeptides.